Consider the following 347-residue polypeptide: NADH-ubiquinone oxidoreductase chain 2 (347 aa).

11 consecutive transmembrane segments (helical) span residues 1–21, 25–45, 59–79, 96–116, 122–142, 149–169, 178–198, 200–220, 237–257, 274–294, and 325–345; these read MNPLILIILLTTLILGTMMVV, HWLLAWIGFEMNMMAFIPIMM, YLLTQATASALLMMAVIINLM, TLMTVALAIKLGLAPFHFWVP, IPLTTGLILLTWQKLAPLSIL, INLHLMLIMSLLSILMGGWGG, IMAYSSIAHMGWMTAILLYNP, LTLLNLLIYITMTFTMFMLFI, MPVITTLTMLTLLSMGGLPPL, DMLIVPTFMAITALLNLYFYM, and LLPTAIVISTMLLPLTPMLSI.

Belongs to the complex I subunit 2 family. As to quaternary structure, core subunit of respiratory chain NADH dehydrogenase (Complex I) which is composed of 45 different subunits. Interacts with TMEM242.

It localises to the mitochondrion inner membrane. The enzyme catalyses a ubiquinone + NADH + 5 H(+)(in) = a ubiquinol + NAD(+) + 4 H(+)(out). Its function is as follows. Core subunit of the mitochondrial membrane respiratory chain NADH dehydrogenase (Complex I) which catalyzes electron transfer from NADH through the respiratory chain, using ubiquinone as an electron acceptor. Essential for the catalytic activity and assembly of complex I. The chain is NADH-ubiquinone oxidoreductase chain 2 from Balaenoptera physalus (Fin whale).